The sequence spans 1258 residues: Cohesin subunit SA-1 (1258 aa).

The interval 1-84 (MITSELPVLQ…HPQQNGEGEP (84 aa)) is disordered. The segment covering 10–19 (QDSTNETTAH) has biased composition (polar residues). Ser24 carries the phosphoserine modification. Basic and acidic residues predominate over residues 53-62 (SPGEKSRIEA). The region spanning 296–381 (FVHRYRDAIA…NRFKDRIVSM (86 aa)) is the SCD domain. 3 positions are modified to phosphoserine: Ser756, Ser1062, and Ser1065. 2 disordered regions span residues 1055–1096 (GGED…SLDN) and 1129–1148 (MGDQ…DFLH). Positions 1062-1074 (SVNSGSSSSKTSS) are enriched in low complexity. A compositionally biased stretch (basic residues) spans 1076-1087 (RNKKGRPPLHKK). Ser1093 carries the post-translational modification Phosphoserine. Positions 1137–1146 (ESEHGSEPDF) are enriched in basic and acidic residues. Lys1161 participates in a covalent cross-link: Glycyl lysine isopeptide (Lys-Gly) (interchain with G-Cter in SUMO2).

The protein belongs to the SCC3 family. As to quaternary structure, cohesin complexes are composed of a heterodimer between a SMC1 protein (SMC1A or SMC1B) and SMC3, which are attached via their hinge domain, and RAD21 which link them at their heads, and one STAG protein (STAG1, STAG2 or STAG3). In cohesin complexes, STAG1 is mutually exclusive with STAG2 and STAG3. Interacts directly with RAD21 in cohesin complex. The cohesin complex interacts with the cohesin loading complex subunits NIPBL/Scc2 (via HEAT repeats) and MAU2/Scc4. NIPBL directly contacts all members of the complex, RAD21, SMC1A/B, SMC3 and STAG1. In terms of processing, phosphorylated by PLK1. The large dissociation of cohesin from chromosome arms during prophase is partly due to its phosphorylation.

It localises to the nucleus. The protein localises to the chromosome. The protein resides in the centromere. Functionally, component of cohesin complex, a complex required for the cohesion of sister chromatids after DNA replication. The cohesin complex apparently forms a large proteinaceous ring within which sister chromatids can be trapped. At anaphase, the complex is cleaved and dissociates from chromatin, allowing sister chromatids to segregate. The cohesin complex may also play a role in spindle pole assembly during mitosis. This is Cohesin subunit SA-1 (STAG1) from Homo sapiens (Human).